Reading from the N-terminus, the 372-residue chain is MALKQLAAAVALALSIQAAQGAAVKEKRATCSNGATVGDASSCAWFDVLDDIQQNLFNGAQCGAEAHESIRLVFHDAIAISPALESQGKFGGGGADGSIILFDDIETNFHPNIGLDEIVNLQKPFIQKHGVTPGDFIAFAGAVAMSNCPGAPQMNFFTGRAPATQAAPDGLVPEPFHTVDQIISRVNDAGEFDELELVWMLSAHSVAAANDVDPTIQGLAFDSTPGVFDSQFFVETQLRGTAFPGSGGNQGEVESPLPGEMRLQSDSSIARDSRTACEWQSFVNNQSKLVSDFQFIFLALTQLGENPDAMTDCSDVIPISKPVPNNVPFSFFPAGKTMADVEQACAETPFPTLTTLPGPETSVQRIQPPPGA.

The first 21 residues, Met1–Gly21, serve as a signal peptide directing secretion. Positions Ala22 to Arg28 are excised as a propeptide. Disulfide bonds link Cys31/Cys43 and Cys62/Cys148. Catalysis depends on His75, which acts as the Proton acceptor. Residues Asp76, Gly94, Asp96, and Ser98 each contribute to the Ca(2+) site. His204 is a heme b binding site. Ser205, Asp222, Thr224, Val227, and Asp229 together coordinate Ca(2+). A disulfide bridge links Cys277 with Cys345. Asn285 is a glycosylation site (N-linked (GlcNAc...) asparagine). Positions Thr352 to Thr361 are enriched in low complexity. The segment at Thr352 to Ala372 is disordered.

It belongs to the peroxidase family. Ligninase subfamily. It depends on heme b as a cofactor. Ca(2+) is required as a cofactor.

It catalyses the reaction 1-(3,4-dimethoxyphenyl)-2-(2-methoxyphenoxy)propane-1,3-diol + H2O2 = 3,4-dimethoxybenzaldehyde + guaiacol + glycolaldehyde + H2O. The catalysed reaction is 2 (3,4-dimethoxyphenyl)methanol + H2O2 = 2 (3,4-dimethoxyphenyl)methanol radical + 2 H2O. Its pathway is secondary metabolite metabolism; lignin degradation. In terms of biological role, depolymerization of lignin. Catalyzes the C(alpha)-C(beta) cleavage of the propyl side chains of lignin. In Phanerodontia chrysosporium (White-rot fungus), this protein is Ligninase LG6 (GLG6).